We begin with the raw amino-acid sequence, 101 residues long: Large ribosomal subunit protein bL21 (101 aa).

The protein belongs to the bacterial ribosomal protein bL21 family. As to quaternary structure, part of the 50S ribosomal subunit. Contacts protein L20.

Functionally, this protein binds to 23S rRNA in the presence of protein L20. This is Large ribosomal subunit protein bL21 from Anaeromyxobacter dehalogenans (strain 2CP-1 / ATCC BAA-258).